A 2892-amino-acid chain; its full sequence is E3 ubiquitin-protein ligase lubel (2892 aa).

Disordered stretches follow at residues Asp-23–Pro-55, Lys-125–Lys-252, Ser-395–Ser-423, Pro-483–Gly-631, Gln-644–Gln-672, Ala-685–Glu-737, Cys-757–Leu-865, and Asp-949–Ser-975. Residues Gly-40–Lys-52 show a composition bias toward low complexity. The segment covering Gly-189 to Ala-198 has biased composition (gly residues). The span at Ala-206–Asn-215 shows a compositional bias: polar residues. Composition is skewed to low complexity over residues Ala-402–His-412 and Pro-483–Arg-503. The span at Val-516–Gln-528 shows a compositional bias: acidic residues. Residues Val-535–Arg-546 are compositionally biased toward polar residues. The span at Ser-547 to Arg-560 shows a compositional bias: basic residues. The span at Gly-606–Ile-623 shows a compositional bias: polar residues. The segment covering Gln-647–Asn-670 has biased composition (basic and acidic residues). Residues Lys-801–Ser-813 are compositionally biased toward polar residues. Composition is skewed to low complexity over residues Ser-818–Ser-837 and Lys-846–Ser-856. One can recognise a UBA-like 1 domain in the interval Met-1042–Gly-1187. Disordered regions lie at residues Leu-1214–Gln-1252, Leu-1477–Thr-1520, Ala-1557–Ser-1653, Ser-1717–Glu-2019, Arg-2032–Thr-2082, Ser-2191–Ser-2316, and Asp-2411–Lys-2431. The span at Val-1241–Gln-1252 shows a compositional bias: polar residues. A compositionally biased stretch (basic and acidic residues) spans Glu-1510 to Glu-1519. A compositionally biased stretch (polar residues) spans Gln-1560–Arg-1571. Basic residues predominate over residues Arg-1576–Arg-1587. Residues Pro-1595 to Gln-1607 show a composition bias toward polar residues. A compositionally biased stretch (basic and acidic residues) spans Lys-1608–Leu-1627. Polar residues-rich tracts occupy residues Ala-1630 to Ser-1653, Ser-1717 to Gly-1726, and Lys-1764 to Ile-1779. The segment covering Leu-1822 to Ser-1834 has biased composition (low complexity). A compositionally biased stretch (polar residues) spans Thr-1859–Thr-1881. Acidic residues predominate over residues Asp-1918–Pro-1927. Basic and acidic residues predominate over residues Asp-1953 to Glu-1963. 2 stretches are compositionally biased toward acidic residues: residues Asp-1964–Gln-1975 and Ser-2036–Glu-2079. 2 stretches are compositionally biased toward low complexity: residues Pro-2214–Ile-2230 and Ser-2269–Lys-2291. The segment covering Asn-2297–Leu-2308 has biased composition (polar residues). The segment covering Asp-2411–Asn-2425 has biased composition (acidic residues). In terms of domain architecture, UBA-like 2 spans Asp-2457–Glu-2513. A TRIAD supradomain region spans residues Leu-2510 to Asn-2748. Zn(2+)-binding residues include Cys-2514, Cys-2517, Cys-2537, Cys-2540, Cys-2618, Cys-2621, Cys-2636, Cys-2639, Cys-2644, Cys-2647, His-2655, Cys-2660, Cys-2690, and Cys-2693. The RING-type 1 zinc-finger motif lies at Cys-2514–Leu-2564. Residues Cys-2514–Ala-2892 are necessary for linear polyubiquitination and sufficent for inducing DptA in the intestine. Residues Gln-2601–Cys-2660 form an IBR-type zinc finger. The segment at Cys-2690–Cys-2720 adopts an RING-type 2; atypical zinc-finger fold. The active site involves Cys-2704. 2 residues coordinate Zn(2+): Cys-2709 and Cys-2712.

Belongs to the RBR family.

The catalysed reaction is [E2 ubiquitin-conjugating enzyme]-S-ubiquitinyl-L-cysteine + [acceptor protein]-L-lysine = [E2 ubiquitin-conjugating enzyme]-L-cysteine + [acceptor protein]-N(6)-ubiquitinyl-L-lysine.. E3 ubiquitin-protein ligase which conjugates linear 'Met-1'- and 'Lys-63'-linked polyubiquitin chains to substrates and plays a crucial role in the NF-kappa-B intestinal inflammatory response to oral infection and in the heat stress response. Preferentially interacts with 'Lys-63'-linked, and to a lesser extent 'Lys-48'-linked, polyubiquitin chains. Upon oral infection with a Gram-negative bacterium E.carotovora subsp. carotovora 15, functions with the E2 ubiquitin-conjugating enzyme Ubc10 to mediate the conjugation of 'Lys-63'- and linear 'Met-1'-linked polyubiquitin chains to the substrate key which is essential for activation of the NF-kappa-B signaling cascade in the adult intestinal epithelium. It is not required for systemic immune response to septic infection with either E.carotovora subsp. carotovora 15 or Gram-positive M.luteus bacteria. Function in controlling linear ubiquitination is also essential for regulating the heat stress response in adults. This function may require the E2 ubiquitin-conjugating enzymes Ubc10 or eff. The polypeptide is E3 ubiquitin-protein ligase lubel (Drosophila melanogaster (Fruit fly)).